Here is a 472-residue protein sequence, read N- to C-terminus: Regulator of G-protein signaling 6 (472 aa).

A DEP domain is found at 40–115; sequence KTGGVPIRTV…DDGTFYRFQA (76 aa). In terms of domain architecture, G protein gamma spans 261–330; sequence IRKQITFLNA…MSKEPSQQRV (70 aa). In terms of domain architecture, RGS spans 336-441; that stretch reads SFDEILKDQV…LMKSDSYARF (106 aa).

In terms of assembly, interacts with GNB5. Interacts with RGS7BP, leading to regulate the subcellular location of the heterodimer formed with GNB5. Interacts with GNAI1.

It is found in the cytoplasm. The protein resides in the cytosol. It localises to the membrane. The protein localises to the nucleus. Its subcellular location is the cell membrane. In terms of biological role, regulates G protein-coupled receptor signaling cascades. Inhibits signal transduction by increasing the GTPase activity of G protein alpha subunits, thereby driving them into their inactive GDP-bound form. The RGS6/GNB5 dimer enhances GNAO1 GTPase activity. This chain is Regulator of G-protein signaling 6 (RGS6), found in Homo sapiens (Human).